Reading from the N-terminus, the 178-residue chain is Endoribonuclease YbeY (178 aa).

Zn(2+) contacts are provided by His118, His122, and His128. The segment at 156–178 (YQQDRQDERDRRLLDKSRYFDEP) is disordered. A compositionally biased stretch (basic and acidic residues) spans 159-178 (DRQDERDRRLLDKSRYFDEP).

The protein belongs to the endoribonuclease YbeY family. Requires Zn(2+) as cofactor.

Its subcellular location is the cytoplasm. Its function is as follows. Single strand-specific metallo-endoribonuclease involved in late-stage 70S ribosome quality control and in maturation of the 3' terminus of the 16S rRNA. In Mycobacterium marinum (strain ATCC BAA-535 / M), this protein is Endoribonuclease YbeY.